We begin with the raw amino-acid sequence, 741 residues long: Catalase-peroxidase 2 (741 aa).

Positions 1-28 (MQKKRVGKSVVAALAIIAMSAGTVAAWA) are cleaved as a signal peptide. A cross-link (tryptophyl-tyrosyl-methioninium (Trp-Tyr) (with M-254)) is located at residues 107-228 (WHGAGTYRTY…LAATQMGLIY (122 aa)). The active-site Proton acceptor is the H108. A cross-link (tryptophyl-tyrosyl-methioninium (Tyr-Met) (with W-107)) is located at residues 228–254 (YVNPEGPNGNPDPVAAAKDIRDAFGRM). Position 269 (H269) interacts with heme b.

The protein belongs to the peroxidase family. Peroxidase/catalase subfamily. As to quaternary structure, homodimer or homotetramer. It depends on heme b as a cofactor. Post-translationally, formation of the three residue Trp-Tyr-Met cross-link is important for the catalase, but not the peroxidase activity of the enzyme.

It carries out the reaction H2O2 + AH2 = A + 2 H2O. It catalyses the reaction 2 H2O2 = O2 + 2 H2O. Its function is as follows. Bifunctional enzyme with both catalase and broad-spectrum peroxidase activity. This chain is Catalase-peroxidase 2, found in Burkholderia ambifaria (strain ATCC BAA-244 / DSM 16087 / CCUG 44356 / LMG 19182 / AMMD) (Burkholderia cepacia (strain AMMD)).